Consider the following 154-residue polypeptide: MIITTWIMYILARKSIGLPFPPRVNSDIEVEETEAVSVVQHWLNKTEEEASRSIKEKISINDPCTQGHDIHVTRDLVKHRLSKCDMLTDPNQEVLEERTRIQFIRWSHTRIFQVPSEMMDDVIQERIDQVRRSVSHLRCDSSSDPCYRNSCSEC.

The N-terminal 24 residues, Met-1 to Val-24, are a transit peptide targeting the mitochondrion. Residues Ser-26 and Ser-116 each carry the phosphoserine modification.

As to expression, expressed in the testis.

Its subcellular location is the mitochondrion outer membrane. It localises to the mitochondrion. The protein resides in the cell projection. The protein localises to the cilium. It is found in the flagellum. In terms of biological role, essential for sperm motility and male fertility. Plays an important role in sperm motility by regulating the organization and function of the mitochondria and is also required for correct sperm midpiece assembly. This is Spermatogenesis-associated protein 19, mitochondrial (Spata19) from Rattus norvegicus (Rat).